An 881-amino-acid polypeptide reads, in one-letter code: DNA mismatch repair protein MutS (881 aa).

ATP is bound at residue G612–S619.

It belongs to the DNA mismatch repair MutS family.

In terms of biological role, this protein is involved in the repair of mismatches in DNA. It is possible that it carries out the mismatch recognition step. This protein has a weak ATPase activity. The polypeptide is DNA mismatch repair protein MutS (Clostridium tetani (strain Massachusetts / E88)).